Reading from the N-terminus, the 264-residue chain is TLC domain-containing protein 2 (264 aa).

6 helical membrane passes run 3–23, 42–62, 77–97, 114–134, 169–189, and 199–219; these read PTGL…HWGL, LCVS…GLSL, WALV…ADLL, VVVS…FSMV, SLAT…LWLF, and LVTL…ILGI. In terms of domain architecture, TLC spans 34 to 227; sequence RDRWQWWNLC…GIRILVNDVL (194 aa). Residues 230 to 264 form a disordered region; sequence RPHPPSPGHEKTRGTRTRRDNGPVTSNSSTLSLKD. Positions 237-250 are enriched in basic and acidic residues; that stretch reads GHEKTRGTRTRRDN. The segment covering 252–264 has biased composition (polar residues); sequence PVTSNSSTLSLKD.

Belongs to the TLCD family.

It is found in the cell membrane. Its function is as follows. Regulates the composition and fluidity of the plasma membrane. Inhibits the incorporation of membrane-fluidizing phospholipids containing omega-3 long-chain polyunsaturated fatty acids (LCPUFA) and thereby promotes membrane rigidity. Does not appear to have any effect on LCPUFA synthesis. The protein is TLC domain-containing protein 2 (TLCD2) of Homo sapiens (Human).